Reading from the N-terminus, the 374-residue chain is Chaperone protein DnaJ (374 aa).

The J domain occupies Asp-5–Gly-70. The CR-type zinc finger occupies Gly-133 to Tyr-211. Residues Cys-146, Cys-149, Cys-163, Cys-166, Cys-185, Cys-188, Cys-199, and Cys-202 each coordinate Zn(2+). CXXCXGXG motif repeat units lie at residues Cys-146–Gly-153, Cys-163–Gly-170, Cys-185–Gly-192, and Cys-199–Gly-206.

This sequence belongs to the DnaJ family. As to quaternary structure, homodimer. Zn(2+) serves as cofactor.

It is found in the cytoplasm. In terms of biological role, participates actively in the response to hyperosmotic and heat shock by preventing the aggregation of stress-denatured proteins and by disaggregating proteins, also in an autonomous, DnaK-independent fashion. Unfolded proteins bind initially to DnaJ; upon interaction with the DnaJ-bound protein, DnaK hydrolyzes its bound ATP, resulting in the formation of a stable complex. GrpE releases ADP from DnaK; ATP binding to DnaK triggers the release of the substrate protein, thus completing the reaction cycle. Several rounds of ATP-dependent interactions between DnaJ, DnaK and GrpE are required for fully efficient folding. Also involved, together with DnaK and GrpE, in the DNA replication of plasmids through activation of initiation proteins. The chain is Chaperone protein DnaJ from Pseudomonas fluorescens (strain ATCC BAA-477 / NRRL B-23932 / Pf-5).